The sequence spans 86 residues: Mu-theraphotoxin-Hhn1c (86 aa).

Residues Met-1 to Ala-21 form the signal peptide. Residues Ser-22–Arg-49 constitute a propeptide that is removed on maturation. Intrachain disulfides connect Cys-51–Cys-66, Cys-58–Cys-73, and Cys-65–Cys-80. An Isoleucine amide modification is found at Ile-84.

The protein belongs to the neurotoxin 10 (Hwtx-1) family. 22 (Htx-4) subfamily. As to quaternary structure, monomer. As to expression, expressed by the venom gland.

Its subcellular location is the secreted. Its function is as follows. Neurotoxin. Selectively blocks neuronal tetrodotoxin-sensitive voltage-gated sodium channels (Nav). Does not affect tetrodotoxin-resistant voltage-gated sodium channels or calcium channels. The chain is Mu-theraphotoxin-Hhn1c from Cyriopagopus hainanus (Chinese bird spider).